The primary structure comprises 323 residues: Methionyl-tRNA formyltransferase (323 aa).

117-120 (SLLP) lines the (6S)-5,6,7,8-tetrahydrofolate pocket.

Belongs to the Fmt family.

The catalysed reaction is L-methionyl-tRNA(fMet) + (6R)-10-formyltetrahydrofolate = N-formyl-L-methionyl-tRNA(fMet) + (6S)-5,6,7,8-tetrahydrofolate + H(+). In terms of biological role, attaches a formyl group to the free amino group of methionyl-tRNA(fMet). The formyl group appears to play a dual role in the initiator identity of N-formylmethionyl-tRNA by promoting its recognition by IF2 and preventing the misappropriation of this tRNA by the elongation apparatus. The sequence is that of Methionyl-tRNA formyltransferase from Acidovorax ebreus (strain TPSY) (Diaphorobacter sp. (strain TPSY)).